The chain runs to 289 residues: MQGVMSKYQINAPAKINLFLHVVGKSTSGYHVLESVFAFIKLYDTLEIEIGSKNRGVEFVQFSGISKHDNTVQRAIGHLVRRCAPGVAKNVYVKVTKNIPVSAGLAGGSADAAAIIRLLGKNWGISEAGMNGVAASVGSDVPVCLQSRTAFVCGMGENVKLLPHARLPNYVVLVRPNDVYLSTRSVFDAYACKEFSKSIGNPPEASDGLLSLVMQSRNDLTDTAILLVPEVKKILAELQSLGGCILSRMSGSGATCFALFEDGEAASDGVRYLKGRHPEWWVYETEISQ.

Residue K15 is part of the active site. 100 to 110 (PVSAGLAGGSA) lines the ATP pocket. Residue D140 is part of the active site.

Belongs to the GHMP kinase family. IspE subfamily.

The catalysed reaction is 4-CDP-2-C-methyl-D-erythritol + ATP = 4-CDP-2-C-methyl-D-erythritol 2-phosphate + ADP + H(+). The protein operates within isoprenoid biosynthesis; isopentenyl diphosphate biosynthesis via DXP pathway; isopentenyl diphosphate from 1-deoxy-D-xylulose 5-phosphate: step 3/6. In terms of biological role, catalyzes the phosphorylation of the position 2 hydroxy group of 4-diphosphocytidyl-2C-methyl-D-erythritol. The protein is 4-diphosphocytidyl-2-C-methyl-D-erythritol kinase of Anaplasma marginale (strain Florida).